The chain runs to 294 residues: 4-hydroxy-tetrahydrodipicolinate synthase (294 aa).

Thr-45 lines the pyruvate pocket. The active-site Proton donor/acceptor is Tyr-133. Residue Lys-161 is the Schiff-base intermediate with substrate of the active site. Residue Ile-203 participates in pyruvate binding.

The protein belongs to the DapA family. Homotetramer; dimer of dimers.

It localises to the cytoplasm. It catalyses the reaction L-aspartate 4-semialdehyde + pyruvate = (2S,4S)-4-hydroxy-2,3,4,5-tetrahydrodipicolinate + H2O + H(+). The protein operates within amino-acid biosynthesis; L-lysine biosynthesis via DAP pathway; (S)-tetrahydrodipicolinate from L-aspartate: step 3/4. Its function is as follows. Catalyzes the condensation of (S)-aspartate-beta-semialdehyde [(S)-ASA] and pyruvate to 4-hydroxy-tetrahydrodipicolinate (HTPA). In Shewanella sp. (strain MR-4), this protein is 4-hydroxy-tetrahydrodipicolinate synthase.